The sequence spans 184 residues: Succinate dehydrogenase cytochrome b560 subunit, mitochondrial (184 aa).

The chain crosses the membrane as a helical span at residues 65–94 (LTWMLSGFHRISGCVMAGTLLVGGLGFAVL). The Mitochondrial intermembrane segment spans residues 95-114 (PLDFTTFVEYIRGWNLPCAV). A helical membrane pass occupies residues 115–139 (TAVFKYIIAFPIIFHTLNGIRFLGF). H129 lines the heme pocket. Topologically, residues 140 to 147 (DLAKGVDN) are mitochondrial matrix. Residues 148 to 169 (IGQVYKSGWLVFGVSAVIALAI) form a helical membrane-spanning segment. Residues 170-172 (VIN) lie on the Mitochondrial intermembrane side of the membrane.

It belongs to the cytochrome b560 family. Component of complex II composed of four subunits: a flavoprotein (FP), iron-sulfur protein (IP), and a cytochrome b560 composed of two transmembrane proteins. The cofactor is heme.

The protein resides in the mitochondrion inner membrane. The protein operates within carbohydrate metabolism; tricarboxylic acid cycle. Its function is as follows. Membrane-anchoring subunit of succinate dehydrogenase (SDH) that is involved in complex II of the mitochondrial electron transport chain and is responsible for transferring electrons from succinate to ubiquinone (coenzyme Q). Mediates resistance to enteropathogenic E.coli infection. The protein is Succinate dehydrogenase cytochrome b560 subunit, mitochondrial (mev-1) of Caenorhabditis briggsae.